Reading from the N-terminus, the 238-residue chain is DNA repair protein RAD59 (238 aa).

This sequence belongs to the RAD52 family. Interacts with RAD51 and RAD52.

The protein localises to the nucleus. Involved in the repair of double-strand breaks in DNA during vegetative growth via recombination and single-strand annealing. Anneals complementary single-stranded DNA. The polypeptide is DNA repair protein RAD59 (RAD59) (Saccharomyces cerevisiae (strain ATCC 204508 / S288c) (Baker's yeast)).